Here is a 577-residue protein sequence, read N- to C-terminus: Arginine--tRNA ligase (577 aa).

The 'HIGH' region signature appears at 122-132 (PNVAKEMHVGH).

It belongs to the class-I aminoacyl-tRNA synthetase family. Monomer.

Its subcellular location is the cytoplasm. It catalyses the reaction tRNA(Arg) + L-arginine + ATP = L-arginyl-tRNA(Arg) + AMP + diphosphate. The polypeptide is Arginine--tRNA ligase (Salmonella arizonae (strain ATCC BAA-731 / CDC346-86 / RSK2980)).